The sequence spans 444 residues: Inward rectifier potassium channel 4 (444 aa).

Residues Met1 to Trp55 lie on the Cytoplasmic side of the membrane. Residues Arg56–Ile80 form a helical membrane-spanning segment. Over Ala81–Gly119 the chain is Extracellular. Positions Phe120 to Gln131 form an intramembrane region, helical; Pore-forming. The pore-forming intramembrane region spans Thr132–Phe138. The short motif at Thr133 to Phe138 is the Selectivity filter element. The Extracellular segment spans residues Arg139–Leu147. The chain crosses the membrane as a helical span at residues Ala148 to Thr169. Over Ile170 to Ile444 the chain is Cytoplasmic. The PDZ-binding motif lies at Ser442–Ile444.

The protein belongs to the inward rectifier-type potassium channel (TC 1.A.2.1) family. KCNJ4 subfamily. Homomultimeric and heteromultimeric association with KCNJ2 and KCNJ12. Interacts with DLG2 and DLG4. Associates, via its PDZ-recognition domain, with a complex containing LIN7A, LIN7B, LIN7C, DLG1, CASK and APBA1. Interacts with TAX1BP3. TAX1BP3 competes with LIN7 family members for KCNJ4 binding.

The protein localises to the cell membrane. It localises to the postsynaptic cell membrane. The protein resides in the cytoplasmic vesicle membrane. The enzyme catalyses K(+)(in) = K(+)(out). Functionally, inward rectifier potassium channels are characterized by a greater tendency to allow potassium to flow into the cell rather than out of it. Their voltage dependence is regulated by the concentration of extracellular potassium; as external potassium is raised, the voltage range of the channel opening shifts to more positive voltages. The inward rectification is mainly due to the blockage of outward current by internal magnesium. Can be blocked by extracellular barium and cesium. This is Inward rectifier potassium channel 4 (KCNJ4) from Mesocricetus auratus (Golden hamster).